The following is a 355-amino-acid chain: Inositol-tetrakisphosphate 1-kinase 4 (355 aa).

Lysine 65 contributes to the 1D-myo-inositol 1,3,4-trisphosphate binding site. Residues arginine 101 and lysine 146 each contribute to the ATP site. The ATP-grasp domain maps to 107–318; sequence VVSGLRTPVS…FFLEMLRGTR (212 aa). 1D-myo-inositol 1,3,4-trisphosphate-binding residues include histidine 157 and lysine 190. ATP contacts are provided by residues 179-190 and serine 205; that span reads QEFVNHGGVLFK. A disordered region spans residues 225 to 248; it reads FANISNQPLPPPDDDGGAADDDTP. The span at 236–247 shows a compositional bias: acidic residues; the sequence is PDDDGGAADDDT. Residues aspartate 272, aspartate 289, and asparagine 291 each coordinate Mg(2+). Asparagine 291 lines the 1D-myo-inositol 1,3,4-trisphosphate pocket.

This sequence belongs to the ITPK1 family. In terms of assembly, monomer. It depends on Mg(2+) as a cofactor.

It carries out the reaction 1D-myo-inositol 3,4,5,6-tetrakisphosphate + ATP = 1D-myo-inositol 1,3,4,5,6-pentakisphosphate + ADP + H(+). It catalyses the reaction 1D-myo-inositol 1,3,4-trisphosphate + ATP = 1D-myo-inositol 1,3,4,5-tetrakisphosphate + ADP + H(+). The enzyme catalyses 1D-myo-inositol 1,3,4-trisphosphate + ATP = 1D-myo-inositol 1,3,4,6-tetrakisphosphate + ADP + H(+). Kinase that can phosphorylate various inositol polyphosphate such as Ins(3,4,5,6)P4 or Ins(1,3,4)P3 and participates in phytic acid biosynthesis in developing seeds. Phytic acid is the primary storage form of phosphorus in cereal grains and other plant seeds. In Oryza sativa subsp. indica (Rice), this protein is Inositol-tetrakisphosphate 1-kinase 4 (ITPK4).